The chain runs to 333 residues: Probable HTH-type transcriptional repressor ExuR (333 aa).

Residues 2–56 (VTIKDIAKLANVSHTTVSRALNNSPYIKEHTKKKILELAEQLNYTPNVNAKSLAM) form the HTH lacI-type domain. The H-T-H motif DNA-binding region spans 4–23 (IKDIAKLANVSHTTVSRALN).

Transcriptional repressor for the exu locus which is required for galacturonate utilization. In Bacillus subtilis (strain 168), this protein is Probable HTH-type transcriptional repressor ExuR (exuR).